A 268-amino-acid chain; its full sequence is Undecaprenyl-diphosphatase (268 aa).

7 consecutive transmembrane segments (helical) span residues 5–25, 43–63, 84–104, 106–126, 184–204, 213–233, and 248–268; these read SIIS…IPVS, GNTF…LVYF, FSVL…HGFI, AVLF…GVIL, AAEF…TLDL, FDDI…GIVV, and PFAI…WLVG.

This sequence belongs to the UppP family.

The protein localises to the cell inner membrane. It catalyses the reaction di-trans,octa-cis-undecaprenyl diphosphate + H2O = di-trans,octa-cis-undecaprenyl phosphate + phosphate + H(+). Its function is as follows. Catalyzes the dephosphorylation of undecaprenyl diphosphate (UPP). Confers resistance to bacitracin. The protein is Undecaprenyl-diphosphatase of Sinorhizobium fredii (strain NBRC 101917 / NGR234).